Reading from the N-terminus, the 632-residue chain is tRNA uridine 5-carboxymethylaminomethyl modification enzyme MnmG (632 aa).

FAD contacts are provided by residues 15-20 (GAGHAG), Ile127, and Ser182. 276–290 (GPRYCPSIEDKIVRF) provides a ligand contact to NAD(+). Gln373 contacts FAD.

This sequence belongs to the MnmG family. Homodimer. Heterotetramer of two MnmE and two MnmG subunits. FAD serves as cofactor.

The protein localises to the cytoplasm. Its function is as follows. NAD-binding protein involved in the addition of a carboxymethylaminomethyl (cmnm) group at the wobble position (U34) of certain tRNAs, forming tRNA-cmnm(5)s(2)U34. The chain is tRNA uridine 5-carboxymethylaminomethyl modification enzyme MnmG from Streptococcus pyogenes serotype M1.